The sequence spans 394 residues: Penicillopepsin-3 (394 aa).

The N-terminal stretch at Met1–Ala20 is a signal peptide. Residues Val21–Ala70 constitute a propeptide, activation peptide. In terms of domain architecture, Peptidase A1 spans Tyr87–Ala392. Catalysis depends on residues Asp103 and Asp284. Residues Cys320 and Cys355 are joined by a disulfide bond.

This sequence belongs to the peptidase A1 family. In terms of assembly, monomer.

It is found in the secreted. The enzyme catalyses Hydrolysis of proteins with broad specificity similar to that of pepsin A, preferring hydrophobic residues at P1 and P1', but also cleaving 20-Gly-|-Glu-21 in the B chain of insulin. Clots milk, and activates trypsinogen.. In terms of biological role, secreted aspartic endopeptidase that allows assimilation of proteinaceous substrates. The scissile peptide bond is attacked by a nucleophilic water molecule activated by two aspartic residues in the active site. Shows a broad primary substrate specificity. Favors hydrophobic residues at the P1 and P1' positions, but can also activate trypsinogen and hydrolyze the B chain of insulin between positions 'Gly-20' and 'Glu-21'. The protein is Penicillopepsin-3 of Penicillium janthinellum (Penicillium vitale).